The sequence spans 254 residues: Glucosamine-6-phosphate deaminase (254 aa).

Asp-63 (proton acceptor; for enolization step) is an active-site residue. Asn-129 acts as the For ring-opening step in catalysis. His-131 (proton acceptor; for ring-opening step) is an active-site residue. Glu-136 (for ring-opening step) is an active-site residue.

The protein belongs to the glucosamine/galactosamine-6-phosphate isomerase family. NagB subfamily.

The catalysed reaction is alpha-D-glucosamine 6-phosphate + H2O = beta-D-fructose 6-phosphate + NH4(+). It participates in amino-sugar metabolism; N-acetylneuraminate degradation; D-fructose 6-phosphate from N-acetylneuraminate: step 5/5. Functionally, catalyzes the reversible isomerization-deamination of glucosamine 6-phosphate (GlcN6P) to form fructose 6-phosphate (Fru6P) and ammonium ion. The protein is Glucosamine-6-phosphate deaminase of Exiguobacterium sp. (strain ATCC BAA-1283 / AT1b).